Reading from the N-terminus, the 342-residue chain is S-adenosylmethionine:tRNA ribosyltransferase-isomerase (342 aa).

Belongs to the QueA family. As to quaternary structure, monomer.

It is found in the cytoplasm. The enzyme catalyses 7-aminomethyl-7-carbaguanosine(34) in tRNA + S-adenosyl-L-methionine = epoxyqueuosine(34) in tRNA + adenine + L-methionine + 2 H(+). It functions in the pathway tRNA modification; tRNA-queuosine biosynthesis. Functionally, transfers and isomerizes the ribose moiety from AdoMet to the 7-aminomethyl group of 7-deazaguanine (preQ1-tRNA) to give epoxyqueuosine (oQ-tRNA). This chain is S-adenosylmethionine:tRNA ribosyltransferase-isomerase, found in Streptococcus mutans serotype c (strain ATCC 700610 / UA159).